The sequence spans 30 residues: Cycloviolacin-O20 (30 aa).

The cyclopeptide (Gly-Asp) cross-link spans 1-30 (GIPCGESCVWIPCLTSAIGCSCKSKVCYRD). Disulfide bonds link Cys4-Cys20, Cys8-Cys22, and Cys13-Cys27.

Post-translationally, this is a cyclic peptide.

In terms of biological role, probably participates in a plant defense mechanism. The chain is Cycloviolacin-O20 from Viola odorata (Sweet violet).